The following is a 180-amino-acid chain: Large ribosomal subunit protein uL6 (180 aa).

Belongs to the universal ribosomal protein uL6 family. In terms of assembly, part of the 50S ribosomal subunit.

Its function is as follows. This protein binds to the 23S rRNA, and is important in its secondary structure. It is located near the subunit interface in the base of the L7/L12 stalk, and near the tRNA binding site of the peptidyltransferase center. This Protochlamydia amoebophila (strain UWE25) protein is Large ribosomal subunit protein uL6.